We begin with the raw amino-acid sequence, 128 residues long: Ribonuclease pancreatic (128 aa).

The span at 1 to 15 (SESSAKKFERQHMDS) shows a compositional bias: basic and acidic residues. The tract at residues 1–28 (SESSAKKFERQHMDSRGSPSTNPNYCNE) is disordered. Positions 7 and 10 each coordinate substrate. Residue histidine 12 is the Proton acceptor of the active site. 4 disulfides stabilise this stretch: cysteine 26-cysteine 84, cysteine 40-cysteine 95, cysteine 58-cysteine 110, and cysteine 65-cysteine 72. A glycan (N-linked (GlcNAc...) asparagine) is linked at asparagine 34. Residues 41–45 (KPVNT), lysine 66, and arginine 85 each bind substrate. Residue histidine 119 is the Proton donor of the active site.

It belongs to the pancreatic ribonuclease family. As to quaternary structure, monomer. Interacts with and forms tight 1:1 complexes with RNH1. Dimerization of two such complexes may occur. Interaction with RNH1 inhibits this protein. In terms of tissue distribution, pancreas.

The protein resides in the secreted. It carries out the reaction an [RNA] containing cytidine + H2O = an [RNA]-3'-cytidine-3'-phosphate + a 5'-hydroxy-ribonucleotide-3'-[RNA].. It catalyses the reaction an [RNA] containing uridine + H2O = an [RNA]-3'-uridine-3'-phosphate + a 5'-hydroxy-ribonucleotide-3'-[RNA].. In terms of biological role, endonuclease that catalyzes the cleavage of RNA on the 3' side of pyrimidine nucleotides. Acts on single-stranded and double-stranded RNA. The sequence is that of Ribonuclease pancreatic (RNASE1) from Myocastor coypus (Coypu).